The sequence spans 121 residues: Large ribosomal subunit protein bL20 (121 aa).

It belongs to the bacterial ribosomal protein bL20 family.

Functionally, binds directly to 23S ribosomal RNA and is necessary for the in vitro assembly process of the 50S ribosomal subunit. It is not involved in the protein synthesizing functions of that subunit. The polypeptide is Large ribosomal subunit protein bL20 (Chlamydia felis (strain Fe/C-56) (Chlamydophila felis)).